We begin with the raw amino-acid sequence, 326 residues long: MLTLARQQQRQNIRWLLCLSVLMLLALLLSLCAGEQWISPGDWFTPRGELFVWQIRLPRTLAVLLVGAALAISGAVMQALFENPLAEPGLLGVSNGAGVGLIAAVLLGQGQLPNWALGLCAIAGALIITLILLRFARRHLSTSRLLLAGVALGIICSALMTWAIYFSTSVDLRQLMYWMMGGFGGVDWRQSWLMLALIPVLLWICCQSRPMNMLALGEISARQLGLPLWFWRNVLVAATGWMVGVSVALAGAIGFIGLVIPHILRLCGLTDHRVLLPGCALAGASAVLLADIVARLALAAAELPIGVVTATLGAPVFIWLLLKAGR.

The next 9 helical transmembrane spans lie at 15–35 (WLLC…CAGE), 61–81 (LAVL…QALF), 88–108 (PGLL…VLLG), 112–132 (LPNW…TLIL), 146–166 (LLAG…AIYF), 184–204 (GGVD…LLWI), 240–260 (GWMV…GLVI), 274–294 (VLLP…DIVA), and 302–322 (ELPI…WLLL).

The protein belongs to the binding-protein-dependent transport system permease family. FecCD subfamily. In terms of assembly, the complex is composed of two ATP-binding proteins (BtuD), two transmembrane proteins (BtuC) and a solute-binding protein (BtuF).

The protein localises to the cell inner membrane. In terms of biological role, part of the ABC transporter complex BtuCDF involved in vitamin B12 import. Involved in the translocation of the substrate across the membrane. The protein is Vitamin B12 import system permease protein BtuC of Shigella sonnei (strain Ss046).